The chain runs to 353 residues: D-alanine--D-alanine ligase (353 aa).

Residues 141 to 349 enclose the ATP-grasp domain; sequence KAALAGAGLA…LEQLVHELLE (209 aa). Residue 176–231 coordinates ATP; it reads ESGLCYPCFIKPANLGSSVGISKARNREELIHGLRLAATLDPRLVVEQGVQARELE. 3 residues coordinate Mg(2+): Asp302, Glu316, and Asn318.

It belongs to the D-alanine--D-alanine ligase family. Requires Mg(2+) as cofactor. The cofactor is Mn(2+).

The protein localises to the cytoplasm. The enzyme catalyses 2 D-alanine + ATP = D-alanyl-D-alanine + ADP + phosphate + H(+). It functions in the pathway cell wall biogenesis; peptidoglycan biosynthesis. Functionally, cell wall formation. This is D-alanine--D-alanine ligase from Parasynechococcus marenigrum (strain WH8102).